Reading from the N-terminus, the 261-residue chain is Probable membrane transporter protein PD_1894 (261 aa).

Transmembrane regions (helical) follow at residues 6–26, 45–64, 78–98, 99–119, 150–170, 175–195, 205–225, and 239–259; these read LIVT…LGGG, HIAI…ANLI, VIFA…GMLI, DGQR…LLML, AASG…LIFA, TINA…ITTL, WTIA…GTLL, and VFGL…WASL.

This sequence belongs to the 4-toluene sulfonate uptake permease (TSUP) (TC 2.A.102) family.

Its subcellular location is the cell membrane. The chain is Probable membrane transporter protein PD_1894 from Xylella fastidiosa (strain Temecula1 / ATCC 700964).